The following is a 227-amino-acid chain: PKHD-type hydroxylase ACICU_00484 (227 aa).

The Fe2OG dioxygenase domain occupies 78-178; sequence DIIPPLFNRY…RIASFFWVQS (101 aa). The Fe cation site is built by His-96, Asp-98, and His-159. Residue Arg-169 participates in 2-oxoglutarate binding.

Fe(2+) serves as cofactor. Requires L-ascorbate as cofactor.

This Acinetobacter baumannii (strain ACICU) protein is PKHD-type hydroxylase ACICU_00484.